Reading from the N-terminus, the 202-residue chain is ATP-dependent Clp protease proteolytic subunit (202 aa).

S106 serves as the catalytic Nucleophile. The active site involves H131.

The protein belongs to the peptidase S14 family. Fourteen ClpP subunits assemble into 2 heptameric rings which stack back to back to give a disk-like structure with a central cavity, resembling the structure of eukaryotic proteasomes.

The protein resides in the cytoplasm. The catalysed reaction is Hydrolysis of proteins to small peptides in the presence of ATP and magnesium. alpha-casein is the usual test substrate. In the absence of ATP, only oligopeptides shorter than five residues are hydrolyzed (such as succinyl-Leu-Tyr-|-NHMec, and Leu-Tyr-Leu-|-Tyr-Trp, in which cleavage of the -Tyr-|-Leu- and -Tyr-|-Trp bonds also occurs).. In terms of biological role, cleaves peptides in various proteins in a process that requires ATP hydrolysis. Has a chymotrypsin-like activity. Plays a major role in the degradation of misfolded proteins. The protein is ATP-dependent Clp protease proteolytic subunit of Shewanella baltica (strain OS223).